We begin with the raw amino-acid sequence, 167 residues long: N-alpha-acetyltransferase (167 aa).

Residues 12 to 167 (FTLRNARMDD…EDAYLMARPL (156 aa)) form the N-acetyltransferase domain. Tyrosine 37 lines the substrate pocket. Histidine 88 is a Zn(2+) binding site. Residues 92–94 (IAV) and 100–105 (RKGIAT) contribute to the acetyl-CoA site. Position 127 (glutamate 127) interacts with Zn(2+). Residues asparagine 132 and 139–141 (YEK) contribute to the acetyl-CoA site. Residue tyrosine 154 coordinates substrate.

Belongs to the acetyltransferase family. ARD1 subfamily. As to quaternary structure, homodimer.

It is found in the cytoplasm. It catalyses the reaction N-terminal L-alanyl-[protein] + acetyl-CoA = N-terminal N(alpha)-acetyl-L-alanyl-[protein] + CoA + H(+). It carries out the reaction N-terminal L-seryl-[protein] + acetyl-CoA = N-terminal N(alpha)-acetyl-L-seryl-[protein] + CoA + H(+). The enzyme catalyses N-terminal L-methionyl-L-leucyl-[protein] + acetyl-CoA = N-terminal N(alpha)-acetyl-L-methionyl-L-leucyl-[protein] + CoA + H(+). The catalysed reaction is N-terminal L-methionyl-L-glutamyl-[protein] + acetyl-CoA = N-terminal N(alpha)-acetyl-L-methionyl-L-glutamyl-[protein] + CoA + H(+). Functionally, displays alpha (N-terminal) acetyltransferase activity. Catalyzes the covalent attachment of an acetyl moiety from acetyl-CoA to the free alpha-amino group at the N-terminus of a protein. NAT is able to acetylate the alpha-amino group of methionine, alanine and serine N-terminal residue substrates, however it has a preference for Ser-N-terminal substrates. In Saccharolobus solfataricus (strain ATCC 35092 / DSM 1617 / JCM 11322 / P2) (Sulfolobus solfataricus), this protein is N-alpha-acetyltransferase.